The chain runs to 321 residues: Olfactory receptor 3A2 (321 aa).

At 1-35 the chain is on the extracellular side; that stretch reads MSLQKLMEPEAGTNRTAVAEFILLGLVQTEEMQPV. N-linked (GlcNAc...) asparagine glycosylation is present at N14. A helical transmembrane segment spans residues 36 to 58; that stretch reads VFVLLLFAYLVTTGGNLSILAAV. Residues 59–66 lie on the Cytoplasmic side of the membrane; sequence LVEPKLHA. Residues 67–88 form a helical membrane-spanning segment; the sequence is PMYFFLGNLSVLDVGCITVTVP. The Extracellular segment spans residues 89 to 109; it reads AMLGRLLSHKSTISYDACLSQ. An intrachain disulfide couples C106 to C198. A helical membrane pass occupies residues 110–129; the sequence is LFFFHLLAGMDCFLLTAMAY. Residues 130–149 are Cytoplasmic-facing; it reads DRLLAICQPLTYSTRMSQTV. A helical transmembrane segment spans residues 150–167; it reads QRMLVAASLACAFTNALT. Residues 168–205 are Extracellular-facing; sequence HTVAMSTLNFCGPNEVNHFYCDLPQLFQLSCSSTQLNE. Residues 206-229 form a helical membrane-spanning segment; that stretch reads LLLFAVGFIMAGTPLVLIITAYSH. Residues 230 to 246 lie on the Cytoplasmic side of the membrane; the sequence is VAAAVLRIRSVEGRKKA. The helical transmembrane segment at 247–270 threads the bilayer; that stretch reads FSTCGSHLTVVCLFFGRGIFNYMR. Over 271–281 the chain is Extracellular; sequence LGSEEASDKDK. The helical transmembrane segment at 282–301 threads the bilayer; the sequence is GVGVFNTVINPMLNPLIYSL. The Cytoplasmic segment spans residues 302-321; it reads RNPDVQGALWQIFLGRRSLT.

Belongs to the G-protein coupled receptor 1 family.

The protein resides in the cell membrane. Functionally, odorant receptor. The polypeptide is Olfactory receptor 3A2 (OR3A2) (Homo sapiens (Human)).